A 261-amino-acid polypeptide reads, in one-letter code: MGQKIHPTGFRLAVTKNWSSRWYANSKDFPGMLNEDIKVREYLKRKLAHASVGRVLIERPAKNARVTVYSARPGVVIGKKGEDIEQLRTDLQRIMGVPVHVSIEEIRKPEIDAQLIADSIAQQLEKRIMFRRAMKRAMQNAMRLGAQGIKVMSAGRLNGAEIARSEWYREGRVPLHTLRADIDYATSEALTTYGIIGIKVWVYKGDMLDRNEQPVAEEPAADDRRPRRTPGRPDGDKPRTRTVKKVDGAADPAKRVRKAGA.

The 69-residue stretch at 39–107 (VREYLKRKLA…PVHVSIEEIR (69 aa)) folds into the KH type-2 domain. Positions 213-261 (QPVAEEPAADDRRPRRTPGRPDGDKPRTRTVKKVDGAADPAKRVRKAGA) are disordered. Residues 221-254 (ADDRRPRRTPGRPDGDKPRTRTVKKVDGAADPAK) are compositionally biased toward basic and acidic residues.

This sequence belongs to the universal ribosomal protein uS3 family. In terms of assembly, part of the 30S ribosomal subunit. Forms a tight complex with proteins S10 and S14.

Binds the lower part of the 30S subunit head. Binds mRNA in the 70S ribosome, positioning it for translation. The protein is Small ribosomal subunit protein uS3 of Dechloromonas aromatica (strain RCB).